We begin with the raw amino-acid sequence, 459 residues long: DNA primase large subunit (459 aa).

[4Fe-4S] cluster-binding residues include cysteine 291, cysteine 369, cysteine 386, and cysteine 428.

It belongs to the eukaryotic-type primase large subunit family. In terms of assembly, heterodimer of a catalytic subunit spp1/pri1 and a regulatory subunit spp2/pri2, also known as the DNA primase complex. Component of the alpha DNA polymerase complex (also known as the alpha DNA polymerase-primase complex) consisting of four subunits: the catalytic subunit pol1, the accessory subunit spb70/pol12, and the primase complex subunits spp1/pri1 and spp2/pri2 respectively. Interacts with orc2; preferentially associates with the unphosphorylated orc2 in G1 pre-Start prior to orc2 being phosphorylated by cdc2, the interaction is mediated by spb70 and might enable the association of the whole alpha DNA polymerase complex to orc2/spb70 complex on chromatin. [4Fe-4S] cluster serves as cofactor.

It is found in the nucleus. The protein resides in the chromosome. Regulatory subunit of the DNA primase complex and component of the DNA polymerase alpha complex (also known as the alpha DNA polymerase-primase complex - primosome/replisome) which play an essential role in the initiation of DNA synthesis. During the S phase of the cell cycle, the DNA polymerase alpha complex (composed of a catalytic subunit pol1, an accessory subunit spb70/pol12 and two primase subunits, the catalytic subunit spp1/pri1 and the regulatory subunit spp2/pri2) is recruited to DNA at the replicative forks. The primase subunit of the polymerase alpha complex initiates DNA synthesis by oligomerising short RNA primers on both leading and lagging strands. This is DNA primase large subunit from Schizosaccharomyces pombe (strain 972 / ATCC 24843) (Fission yeast).